The sequence spans 286 residues: Bifunctional protein FolD (286 aa).

NADP(+) contacts are provided by residues 166-168 (GAS) and Ile232.

This sequence belongs to the tetrahydrofolate dehydrogenase/cyclohydrolase family. Homodimer.

It carries out the reaction (6R)-5,10-methylene-5,6,7,8-tetrahydrofolate + NADP(+) = (6R)-5,10-methenyltetrahydrofolate + NADPH. The enzyme catalyses (6R)-5,10-methenyltetrahydrofolate + H2O = (6R)-10-formyltetrahydrofolate + H(+). It participates in one-carbon metabolism; tetrahydrofolate interconversion. Its function is as follows. Catalyzes the oxidation of 5,10-methylenetetrahydrofolate to 5,10-methenyltetrahydrofolate and then the hydrolysis of 5,10-methenyltetrahydrofolate to 10-formyltetrahydrofolate. This Marinobacter nauticus (strain ATCC 700491 / DSM 11845 / VT8) (Marinobacter aquaeolei) protein is Bifunctional protein FolD.